The primary structure comprises 422 residues: Glutamyl-tRNA reductase (422 aa).

Substrate contacts are provided by residues T49–R52, S107, E112–Q114, and Q118. The active-site Nucleophile is C50. G187–I192 contributes to the NADP(+) binding site.

This sequence belongs to the glutamyl-tRNA reductase family. Homodimer.

The enzyme catalyses (S)-4-amino-5-oxopentanoate + tRNA(Glu) + NADP(+) = L-glutamyl-tRNA(Glu) + NADPH + H(+). The protein operates within porphyrin-containing compound metabolism; protoporphyrin-IX biosynthesis; 5-aminolevulinate from L-glutamyl-tRNA(Glu): step 1/2. Functionally, catalyzes the NADPH-dependent reduction of glutamyl-tRNA(Glu) to glutamate 1-semialdehyde (GSA). The polypeptide is Glutamyl-tRNA reductase (Pseudomonas paraeruginosa (strain DSM 24068 / PA7) (Pseudomonas aeruginosa (strain PA7))).